The primary structure comprises 2867 residues: Reticulocyte-binding protein 2 (2867 aa).

The N-terminal stretch at 1–21 (MEKNVLWVIFYNFLVILLASC) is a signal peptide. At 22 to 2805 (NDSNRSKSNS…TAKEAIGKTR (2784 aa)) the chain is on the extracellular side. Disordered regions lie at residues 52–73 (KYNN…NNHN), 2650–2682 (ETKT…ASVP), and 2712–2799 (DNTH…TAKE). Over residues 61–73 (NIGNQINNDNNHN) the composition is skewed to low complexity. Positions 2659–2674 (KAKEEKVPPKETENRA) are enriched in basic and acidic residues. Over residues 2725–2736 (DSISAPQEQVEY) the composition is skewed to polar residues. Residues 2743–2754 (ENDETTEEESEH) are compositionally biased toward acidic residues. Positions 2755–2799 (DDAHDDTHDDTHDDTHDDTHDDTHDDTHDDTHDESQTGRDSTAKE) are enriched in basic and acidic residues. Tandem repeats lie at residues 2758–2761 (HDDT), 2762–2765 (HDDT), 2766–2769 (HDDT), 2770–2773 (HDDT), 2774–2777 (HDDT), 2778–2781 (HDDT), and 2782–2785 (HDDT). Residues 2758 to 2785 (HDDTHDDTHDDTHDDTHDDTHDDTHDDT) form a 7 X 4 AA tandem repeats of H-D-D-T region. The chain crosses the membrane as a helical span at residues 2806–2826 (LAGAVIIAMSVLSGFIIIVFK). The Cytoplasmic segment spans residues 2827–2867 (DKDEEEKDHNEHGYNEAFGEHDEYNMHDKEEVIEVCFNEED).

The protein resides in the cell membrane. Involved in reticulocyte adhesion. Specifically binds to human reticulocyte cells. The sequence is that of Reticulocyte-binding protein 2 (RBP-2) from Plasmodium vivax (strain Belem).